The chain runs to 271 residues: High mobility group protein homolog TDP-1 (271 aa).

Positions 8-63 (GPLPTDIEETVITIMREEGVRYITAKILRMRLESKYQMEFGPHKAAIDDIVARAMQ) constitute a DEK-C domain. The interval 75–118 (LKEKDASKSSGGKGSKRARSAGAEAPSKTKKEMTEKPKKPADYP) is disordered. Basic and acidic residues predominate over residues 101–116 (SKTKKEMTEKPKKPAD). DNA-binding regions (HMG box) lie at residues 118-186 (PKPA…DEYK) and 206-270 (PKRA…AALP).

Its subcellular location is the nucleus. Unknown. May play a role in transcription and/or DNA replication. It is not known whether this protein is DNA sequence binding-specific or not. The chain is High mobility group protein homolog TDP-1 from Trypanosoma brucei rhodesiense.